The chain runs to 210 residues: HTH-type transcriptional regulator MtrR (210 aa).

Positions 9–69 (LKTKEHLMLA…ALFQRICDDI (61 aa)) constitute an HTH tetR-type domain. Residues 32 to 51 (SLNEIAQAAGVTRGALYWHF) constitute a DNA-binding region (H-T-H motif).

As to quaternary structure, homodimer. Binds to DNA as a pair of dimers.

With respect to regulation, DNA binding is affected significantly by increasing the NaCl concentration. Its function is as follows. Controls the permeability of the cell envelope to hydrophobic compounds such as antibiotics and detergents. Represses transcription of the mtrCDE-encoded efflux pump by binding within the mtrCDE promoter. Also negatively regulates the expression of farR, by binding to its promoter region, leading indirectly to the positive regulation of expression of the farAB-encoded efflux pump. The sequence is that of HTH-type transcriptional regulator MtrR from Neisseria gonorrhoeae.